The chain runs to 208 residues: Small ribosomal subunit protein uS4 (208 aa).

An S4 RNA-binding domain is found at 98–158 (RRLDNIVYRL…EKSRKVASIN (61 aa)).

Belongs to the universal ribosomal protein uS4 family. In terms of assembly, part of the 30S ribosomal subunit. Contacts protein S5. The interaction surface between S4 and S5 is involved in control of translational fidelity.

In terms of biological role, one of the primary rRNA binding proteins, it binds directly to 16S rRNA where it nucleates assembly of the body of the 30S subunit. With S5 and S12 plays an important role in translational accuracy. The protein is Small ribosomal subunit protein uS4 of Geotalea daltonii (strain DSM 22248 / JCM 15807 / FRC-32) (Geobacter daltonii).